Consider the following 267-residue polypeptide: Expansin-B10 (267 aa).

The N-terminal stretch at 1–22 is a signal peptide; sequence MASSCLLLACVVAAAMVSAVSC. N32 carries an N-linked (GlcNAc...) asparagine glycan. An Expansin-like EG45 domain is found at 61 to 167; sequence GGACGYKDID…RRVRCKYPGE (107 aa). 3 disulfides stabilise this stretch: C64–C92, C95–C162, and C100–C106. Positions 181 to 262 constitute an Expansin-like CBD domain; it reads NYFAVLVKYV…NWKANALYKS (82 aa). A glycan (N-linked (GlcNAc...) asparagine) is linked at N213.

It belongs to the expansin family. Expansin B subfamily.

It localises to the secreted. The protein localises to the cell wall. It is found in the membrane. In terms of biological role, may cause loosening and extension of plant cell walls by disrupting non-covalent bonding between cellulose microfibrils and matrix glucans. No enzymatic activity has been found. May be required for rapid internodal elongation in deepwater rice during submergence. In Oryza sativa subsp. japonica (Rice), this protein is Expansin-B10 (EXPB10).